The following is an 842-amino-acid chain: Serine/threonine-protein kinase CLA4 (842 aa).

Residues 12 to 34 (DNDFQNIGPAPRPPSSNSQGRTC) are disordered. A phosphoserine mark is found at serine 29 and serine 46. The PH domain maps to 61–179 (SKKKSGWVSY…WLDAIFAKCP (119 aa)). The 14-residue stretch at 184-197 (VSSPTNFTHKVHVG) folds into the CRIB domain. The segment covering 247–274 (GNPTNTLDKPQSGETSSSQKSLPNSYND) has biased composition (polar residues). A disordered region spans residues 247-524 (GNPTNTLDKP…KPKKPARPTM (278 aa)). The span at 279 to 296 (NNSVNSKSSSGVSSSMVS) shows a compositional bias: low complexity. Residues 297-307 (QRKTSQPPNTK) are compositionally biased toward polar residues. The segment covering 308–319 (SPVSLGSGSLPP) has biased composition (low complexity). The segment covering 323–343 (KLPTSQSNIPRHLQNVPNQQY) has biased composition (polar residues). Residues serine 351 and serine 367 each carry the phosphoserine modification. A compositionally biased stretch (low complexity) spans 372-387 (QQQQQQQQQQKQQHQQ). Residues 396–408 (SPSPSPSPSPLNP) are compositionally biased toward pro residues. A compositionally biased stretch (low complexity) spans 418–435 (PYSKQPQSPLSSQSTQNQ). At serine 425 the chain carries Phosphoserine. Composition is skewed to polar residues over residues 470 to 481 (PSNQNATSNTHV) and 488 to 497 (NDQSTPQTMR). Residues 546-825 (FKVIEKAGQG…TEELLHHGFF (280 aa)) enclose the Protein kinase domain. ATP is bound by residues 552–560 (AGQGASGSV) and lysine 594. Aspartate 693 serves as the catalytic Proton acceptor.

It belongs to the protein kinase superfamily. STE Ser/Thr protein kinase family. STE20 subfamily. Interacts with CDC42.

The catalysed reaction is L-seryl-[protein] + ATP = O-phospho-L-seryl-[protein] + ADP + H(+). It carries out the reaction L-threonyl-[protein] + ATP = O-phospho-L-threonyl-[protein] + ADP + H(+). In terms of biological role, involved in budding and cytokinesis. The chain is Serine/threonine-protein kinase CLA4 (CLA4) from Saccharomyces cerevisiae (strain ATCC 204508 / S288c) (Baker's yeast).